Consider the following 413-residue polypeptide: Gamma-lactamase FDB1 (413 aa).

Residues histidine 126, histidine 128, aspartate 130, histidine 131, histidine 211, aspartate 235, and histidine 323 each coordinate Zn(2+).

The protein belongs to the metallo-beta-lactamase superfamily.

It participates in xenobiotic degradation. In terms of biological role, gamma-lactamase; part of the Fusarium detoxification of benzoxazolinone cluster involved in the degradation of benzoxazolinones produced by the host plant. Maize, wheat, and rye produce the 2 benzoxazinone phytoanticipins 2,4-dihy-droxy-7-methoxy-1,4-benzoxazin-3-one (DIMBOA) and 2,4-dihydroxy-1,4-benzoxazin-3-one (DIBOA) that, due to their inherent instability once released, spontaneously degrade to the more stable corresponding benzoxazolinones, 6-methoxy-2-benzoxazolinone (MBOA) and 2-benzoxazolinone (BOA), respectively. The first step in the detoxification of benzoxazolinones involves the hydrolysis of the cyclic ester bond of benzoxazolinones by the gamma-lactamase FDB1 to aminophenols. FDB1 is able to convert BOA into 2-aminophenol (2-AP), as well as MBOA into 5-methoxy-2-aminophenol (2-AMP). The N-malonyltransferase FDB2 then metabolizes aminophenols via N-malonylation to non-toxic malonamic acids. FDB2 converts 2-AP into N-(2-hydroxyphenyl) malonamic acid (HPMA) and 2-AMP into N-(2-hydroxy-4-methoxyphenyl) malonamic acid (HMPMA). The cluster also contains 2 transcription factors (FDB3 and FPSE_08121), an aldo-keto reductase (FPSE_08125) that possibly associates with a ketone component of BOA and MBOA degradation, an esterase (FPSE_08126), an acyl-CoA transferase (FPSE_08120), a solute carrier protein (FPSE_08119) and a transmembrane transporter (FPSE_08127) proposed to shuttle metabolites of benzoxazolinone degradation. The sequence is that of Gamma-lactamase FDB1 from Fusarium pseudograminearum (strain CS3096) (Wheat and barley crown-rot fungus).